The following is a 199-amino-acid chain: Recombination protein RecR (199 aa).

The segment at 58-73 (CSTCNNLTDKDPCTIC) adopts a C4-type zinc-finger fold. The Toprim domain maps to 81–176 (NLICVVQDAR…RVTRLAYGLP (96 aa)).

This sequence belongs to the RecR family.

Its function is as follows. May play a role in DNA repair. It seems to be involved in an RecBC-independent recombinational process of DNA repair. It may act with RecF and RecO. The sequence is that of Recombination protein RecR from Natranaerobius thermophilus (strain ATCC BAA-1301 / DSM 18059 / JW/NM-WN-LF).